We begin with the raw amino-acid sequence, 379 residues long: Homoserine O-succinyltransferase (379 aa).

In terms of domain architecture, AB hydrolase-1 spans 48–357 (NAVLICHALS…SAHGHDAFLM (310 aa)). S154 (nucleophile) is an active-site residue. R224 is a binding site for substrate. Catalysis depends on residues D319 and H352. Position 353 (D353) interacts with substrate.

The protein belongs to the AB hydrolase superfamily. MetX family. In terms of assembly, homodimer.

It localises to the cytoplasm. It catalyses the reaction L-homoserine + succinyl-CoA = O-succinyl-L-homoserine + CoA. The protein operates within amino-acid biosynthesis; L-methionine biosynthesis via de novo pathway; O-succinyl-L-homoserine from L-homoserine: step 1/1. Activity increases in the presence of MetW. Its function is as follows. Transfers a succinyl group from succinyl-CoA to L-homoserine, forming succinyl-L-homoserine. The sequence is that of Homoserine O-succinyltransferase from Neisseria gonorrhoeae.